Here is a 534-residue protein sequence, read N- to C-terminus: Apolipoprotein N-acyltransferase (534 aa).

Helical transmembrane passes span Leu18–Ala38, Ala39–Asp59, Trp74–Val94, Leu105–Ala125, Ile127–Glu147, Val178–Ala198, and Ala209–Ala229. The CN hydrolase domain maps to Val246 to Arg496. Residue Glu291 is the Proton acceptor of the active site. Residue Lys355 is part of the active site. The active-site Nucleophile is the Cys408. Residues Thr504–Val524 traverse the membrane as a helical segment.

Belongs to the CN hydrolase family. Apolipoprotein N-acyltransferase subfamily.

The protein localises to the cell inner membrane. It carries out the reaction N-terminal S-1,2-diacyl-sn-glyceryl-L-cysteinyl-[lipoprotein] + a glycerophospholipid = N-acyl-S-1,2-diacyl-sn-glyceryl-L-cysteinyl-[lipoprotein] + a 2-acyl-sn-glycero-3-phospholipid + H(+). The protein operates within protein modification; lipoprotein biosynthesis (N-acyl transfer). In terms of biological role, catalyzes the phospholipid dependent N-acylation of the N-terminal cysteine of apolipoprotein, the last step in lipoprotein maturation. In Rhizobium leguminosarum bv. trifolii (strain WSM2304), this protein is Apolipoprotein N-acyltransferase.